A 110-amino-acid polypeptide reads, in one-letter code: Waprin-Thr1 (110 aa).

A signal peptide spans 1 to 20 (MYKKGTILVLAYLLIATAVC). A WAP domain is found at 22 to 68 (LSYKEGHCPLRNSVSKCIPRCVSDYQCSFNEKCCPNKCGSESCVQAS). Disulfide bonds link Cys29–Cys55, Cys38–Cys59, Cys42–Cys54, and Cys48–Cys64.

This sequence belongs to the venom waprin family. Cys-rich waprin subfamily. Expressed by the venom gland.

It is found in the secreted. Antimicrobial peptides with activity against Gram-positive and Gram-negative bacteria as well as fungi. Recognizes carbohydrates in the microbial cell walls, and induces structural damage to them. Also inhibits microbial serine proteases subtilisin A and proteinase K, as well as human and porcine elastases. Carbohydrates that are recognized are LPS, mannan, peptidoglycan, and N-acetl-D-glucosamine. The chain is Waprin-Thr1 from Apis mellifera (Honeybee).